Reading from the N-terminus, the 186-residue chain is Riboflavin kinase (186 aa).

Residues T42 and N44 each contribute to the Mg(2+) site. E123 acts as the Nucleophile in catalysis.

The protein belongs to the flavokinase family. The cofactor is Zn(2+). Mg(2+) serves as cofactor.

The catalysed reaction is riboflavin + ATP = FMN + ADP + H(+). The protein operates within cofactor biosynthesis; FMN biosynthesis; FMN from riboflavin (ATP route): step 1/1. Catalyzes the phosphorylation of riboflavin (vitamin B2) to form flavin mononucleotide (FMN) coenzyme. In Eremothecium gossypii (strain ATCC 10895 / CBS 109.51 / FGSC 9923 / NRRL Y-1056) (Yeast), this protein is Riboflavin kinase (FMN1).